A 161-amino-acid polypeptide reads, in one-letter code: Ferric uptake regulation protein 1 (161 aa).

Zn(2+)-binding residues include Cys94 and Cys97.

It belongs to the Fur family.

The protein resides in the cytoplasm. Functionally, acts as a global negative controlling element, employing Fe(2+) as a cofactor to bind the operator of the repressed genes. The polypeptide is Ferric uptake regulation protein 1 (fur1) (Mycolicibacterium fortuitum (Mycobacterium fortuitum)).